A 197-amino-acid polypeptide reads, in one-letter code: Small ribosomal subunit protein eS1 (197 aa).

Belongs to the eukaryotic ribosomal protein eS1 family.

The sequence is that of Small ribosomal subunit protein eS1 from Sulfolobus acidocaldarius (strain ATCC 33909 / DSM 639 / JCM 8929 / NBRC 15157 / NCIMB 11770).